Here is a 541-residue protein sequence, read N- to C-terminus: Chaperonin GroEL (541 aa).

Residues 29-32, 86-90, G413, and D494 contribute to the ATP site; these read TIGP and DGTTT.

It belongs to the chaperonin (HSP60) family. Forms a cylinder of 14 subunits composed of two heptameric rings stacked back-to-back. Interacts with the co-chaperonin GroES.

It localises to the cytoplasm. The enzyme catalyses ATP + H2O + a folded polypeptide = ADP + phosphate + an unfolded polypeptide.. In terms of biological role, together with its co-chaperonin GroES, plays an essential role in assisting protein folding. The GroEL-GroES system forms a nano-cage that allows encapsulation of the non-native substrate proteins and provides a physical environment optimized to promote and accelerate protein folding. The sequence is that of Chaperonin GroEL from Lachnospira eligens (strain ATCC 27750 / DSM 3376 / VPI C15-48 / C15-B4) (Eubacterium eligens).